Consider the following 635-residue polypeptide: Threonine--tRNA ligase (635 aa).

Positions methionine 1–threonine 61 constitute a TGS domain. Residues aspartate 242–proline 533 form a catalytic region. Zn(2+) contacts are provided by cysteine 333, histidine 384, and histidine 510.

It belongs to the class-II aminoacyl-tRNA synthetase family. As to quaternary structure, homodimer. Requires Zn(2+) as cofactor.

The protein resides in the cytoplasm. It carries out the reaction tRNA(Thr) + L-threonine + ATP = L-threonyl-tRNA(Thr) + AMP + diphosphate + H(+). Its function is as follows. Catalyzes the attachment of threonine to tRNA(Thr) in a two-step reaction: L-threonine is first activated by ATP to form Thr-AMP and then transferred to the acceptor end of tRNA(Thr). Also edits incorrectly charged L-seryl-tRNA(Thr). This chain is Threonine--tRNA ligase, found in Methylobacillus flagellatus (strain ATCC 51484 / DSM 6875 / VKM B-1610 / KT).